Consider the following 259-residue polypeptide: Ribonuclease HII (259 aa).

The RNase H type-2 domain occupies 70 to 258 (TLIVGIDEVG…VKSLVLGKKE (189 aa)). A divalent metal cation is bound by residues D76, E77, and D168.

This sequence belongs to the RNase HII family. Requires Mn(2+) as cofactor. It depends on Mg(2+) as a cofactor.

It localises to the cytoplasm. The enzyme catalyses Endonucleolytic cleavage to 5'-phosphomonoester.. Its function is as follows. Endonuclease that specifically degrades the RNA of RNA-DNA hybrids. This chain is Ribonuclease HII, found in Streptococcus pneumoniae (strain ATCC 700669 / Spain 23F-1).